Reading from the N-terminus, the 412-residue chain is Major facilitator superfamily domain-containing protein 3 (412 aa).

The next 12 helical transmembrane spans lie at 10-30 (GLYLVQGLPYGLQSSLLPILL), 40-60 (VGLTKGLYAPWLLKLAWAPLV), 68-88 (VWLTLSTLSLGLVCGLLAVLP), 99-119 (TTVMGLLLLLNLGAAVQDVAL), 152-172 (GGLLVLFPTLSWPLLFLLLAA), 173-193 (TYWLAAALAWAAPALGRLPWP), 204-224 (YLLQDLLAVPGTLWTAGFVLT), 252-272 (LWSGLGAVTCSIAGSSLGGAL), 291-311 (LGSLACQTALLFHLNSPGASV), 320-340 (AVLLSLCLQQFFGGVVTTATF), 361-381 (FLATLELLGKLLLGTLAGVLA), and 384-404 (LGPHLCFAVFLVLSALPVLDL).

The protein belongs to the major facilitator superfamily. In terms of tissue distribution, in brain, expressed in the cortex, striatum, hippocampus, hypothalamus, thalamus and cerebellum (at protein level). Widely expressed with highest levels in kidney and liver.

The protein resides in the membrane. The polypeptide is Major facilitator superfamily domain-containing protein 3 (Mfsd3) (Mus musculus (Mouse)).